Reading from the N-terminus, the 416-residue chain is Neamine transaminase NeoN (416 aa).

Residue lysine 231 is modified to N6-(pyridoxal phosphate)lysine.

The protein belongs to the class-III pyridoxal-phosphate-dependent aminotransferase family. Requires pyridoxal 5'-phosphate as cofactor.

The enzyme catalyses neomycin C + 2-oxoglutarate = 6'''-deamino-6'''-oxoneomycin C + L-glutamate. It catalyses the reaction neamine + 2-oxoglutarate = 6'-oxoparomamine + L-glutamate. The protein operates within antibiotic biosynthesis; neomycin biosynthesis. Its function is as follows. 6'-oxoglucosaminyl:L-glutamate aminotransferase that catalyzes pyridoxal-5'-phosphate-mediated transamination for the conversion of paromamine to neamine in the biosynthetic pathway of neomycin. Also able to catalyze deamination at C-6''' of neomycin. This is Neamine transaminase NeoN (neoN) from Streptomyces fradiae (Streptomyces roseoflavus).